The chain runs to 109 residues: Trafficking protein particle complex subunit 2-like protein (109 aa).

The protein belongs to the TRAPP small subunits family. Sedlin subfamily. Component of the multisubunit TRAPP (transport protein particle) complex, which includes at least TRAPPC2, TRAPPC2L, TRAPPC3, TRAPPC3L, TRAPPC4, TRAPPC5, TRAPPC8, TRAPPC9, TRAPPC10, TRAPPC11 and TRAPPC12. Interacts with the heterodimer TRAPPC3-TRAPPC6A.

It localises to the cytoplasm. The protein resides in the perinuclear region. Its subcellular location is the endoplasmic reticulum. The protein localises to the golgi apparatus. In terms of biological role, may play a role in vesicular transport from endoplasmic reticulum to Golgi. This is Trafficking protein particle complex subunit 2-like protein (TRAPPC2L) from Pongo abelii (Sumatran orangutan).